A 418-amino-acid chain; its full sequence is 3-isopropylmalate dehydratase large subunit (418 aa).

Residues C298, C358, and C361 each coordinate [4Fe-4S] cluster.

The protein belongs to the aconitase/IPM isomerase family. LeuC type 2 subfamily. Heterodimer of LeuC and LeuD. The cofactor is [4Fe-4S] cluster.

The catalysed reaction is (2R,3S)-3-isopropylmalate = (2S)-2-isopropylmalate. It participates in amino-acid biosynthesis; L-leucine biosynthesis; L-leucine from 3-methyl-2-oxobutanoate: step 2/4. Its function is as follows. Catalyzes the isomerization between 2-isopropylmalate and 3-isopropylmalate, via the formation of 2-isopropylmaleate. The sequence is that of 3-isopropylmalate dehydratase large subunit from Caldanaerobacter subterraneus subsp. tengcongensis (strain DSM 15242 / JCM 11007 / NBRC 100824 / MB4) (Thermoanaerobacter tengcongensis).